The sequence spans 200 residues: NADH-quinone oxidoreductase subunit C (200 aa).

The protein belongs to the complex I 30 kDa subunit family. In terms of assembly, NDH-1 is composed of 14 different subunits. Subunits NuoB, C, D, E, F, and G constitute the peripheral sector of the complex.

Its subcellular location is the cell inner membrane. The catalysed reaction is a quinone + NADH + 5 H(+)(in) = a quinol + NAD(+) + 4 H(+)(out). NDH-1 shuttles electrons from NADH, via FMN and iron-sulfur (Fe-S) centers, to quinones in the respiratory chain. The immediate electron acceptor for the enzyme in this species is believed to be ubiquinone. Couples the redox reaction to proton translocation (for every two electrons transferred, four hydrogen ions are translocated across the cytoplasmic membrane), and thus conserves the redox energy in a proton gradient. This chain is NADH-quinone oxidoreductase subunit C, found in Maricaulis maris (strain MCS10) (Caulobacter maris).